We begin with the raw amino-acid sequence, 182 residues long: Large ribosomal subunit protein uL6 (182 aa).

It belongs to the universal ribosomal protein uL6 family. In terms of assembly, part of the 50S ribosomal subunit.

Its function is as follows. This protein binds to the 23S rRNA, and is important in its secondary structure. It is located near the subunit interface in the base of the L7/L12 stalk, and near the tRNA binding site of the peptidyltransferase center. The polypeptide is Large ribosomal subunit protein uL6 (Dehalococcoides mccartyi (strain ATCC BAA-2100 / JCM 16839 / KCTC 5957 / BAV1)).